A 561-amino-acid polypeptide reads, in one-letter code: Urocanate hydratase (561 aa).

Residues 52–53 (GG), Gln130, 176–178 (GMG), Glu196, Arg201, 242–243 (NA), 263–267 (QTSAH), 273–274 (YL), and Tyr322 each bind NAD(+). Residue Cys410 is part of the active site. Residue Gly492 participates in NAD(+) binding.

This sequence belongs to the urocanase family. NAD(+) is required as a cofactor.

It is found in the cytoplasm. The catalysed reaction is 4-imidazolone-5-propanoate = trans-urocanate + H2O. It functions in the pathway amino-acid degradation; L-histidine degradation into L-glutamate; N-formimidoyl-L-glutamate from L-histidine: step 2/3. Its function is as follows. Catalyzes the conversion of urocanate to 4-imidazolone-5-propionate. The chain is Urocanate hydratase from Salmonella arizonae (strain ATCC BAA-731 / CDC346-86 / RSK2980).